The following is a 122-amino-acid chain: uncharacterized protein (122 aa).

The helical transmembrane segment at 9–25 threads the bilayer; that stretch reads AFPSPVFLGGVFFVFFF.

It localises to the cytoplasm. The protein resides in the nucleus. It is found in the membrane. This is an uncharacterized protein from Saccharomyces cerevisiae (strain ATCC 204508 / S288c) (Baker's yeast).